Reading from the N-terminus, the 337-residue chain is Anthranilate phosphoribosyltransferase (337 aa).

5-phospho-alpha-D-ribose 1-diphosphate-binding positions include Gly81, 84–85 (GD), Ser89, 91–94 (NVST), 109–117 (KHGNRAMSS), and Ala121. Gly81 provides a ligand contact to anthranilate. Residue Ser93 coordinates Mg(2+). Residue Asn112 coordinates anthranilate. Arg167 contacts anthranilate. Mg(2+) contacts are provided by Asp226 and Glu227.

It belongs to the anthranilate phosphoribosyltransferase family. In terms of assembly, homodimer. Mg(2+) serves as cofactor.

It catalyses the reaction N-(5-phospho-beta-D-ribosyl)anthranilate + diphosphate = 5-phospho-alpha-D-ribose 1-diphosphate + anthranilate. It participates in amino-acid biosynthesis; L-tryptophan biosynthesis; L-tryptophan from chorismate: step 2/5. Catalyzes the transfer of the phosphoribosyl group of 5-phosphorylribose-1-pyrophosphate (PRPP) to anthranilate to yield N-(5'-phosphoribosyl)-anthranilate (PRA). This is Anthranilate phosphoribosyltransferase from Afipia carboxidovorans (strain ATCC 49405 / DSM 1227 / KCTC 32145 / OM5) (Oligotropha carboxidovorans).